We begin with the raw amino-acid sequence, 319 residues long: Acetyl-coenzyme A carboxylase carboxyl transferase subunit alpha (319 aa).

In terms of domain architecture, CoA carboxyltransferase C-terminal spans 35 to 296; the sequence is DLDKEIEQLE…KATLVANLAE (262 aa).

It belongs to the AccA family. In terms of assembly, acetyl-CoA carboxylase is a heterohexamer composed of biotin carboxyl carrier protein (AccB), biotin carboxylase (AccC) and two subunits each of ACCase subunit alpha (AccA) and ACCase subunit beta (AccD).

It is found in the cytoplasm. It carries out the reaction N(6)-carboxybiotinyl-L-lysyl-[protein] + acetyl-CoA = N(6)-biotinyl-L-lysyl-[protein] + malonyl-CoA. It functions in the pathway lipid metabolism; malonyl-CoA biosynthesis; malonyl-CoA from acetyl-CoA: step 1/1. In terms of biological role, component of the acetyl coenzyme A carboxylase (ACC) complex. First, biotin carboxylase catalyzes the carboxylation of biotin on its carrier protein (BCCP) and then the CO(2) group is transferred by the carboxyltransferase to acetyl-CoA to form malonyl-CoA. The polypeptide is Acetyl-coenzyme A carboxylase carboxyl transferase subunit alpha (Photobacterium profundum (strain SS9)).